A 361-amino-acid chain; its full sequence is Ataxin-3 (361 aa).

Met-1 is covalently cross-linked (Peptide (Met-Gly) (interchain with G-Cter in ubiquitin)). In terms of domain architecture, Josephin spans 1 to 180; sequence MESIFHEKQE…DCEADQLLQM (180 aa). Catalysis depends on Cys-14, which acts as the Nucleophile. Catalysis depends on His-119, which acts as the Proton acceptor. Asn-134 is a catalytic residue. Residue Lys-200 forms a Glycyl lysine isopeptide (Lys-Gly) (interchain with G-Cter in ubiquitin) linkage. Phosphoserine is present on Ser-219. 2 UIM domains span residues 224-243 and 244-263; these read EDEEDLQRALALSRQEIDME and DEEADLRRAIQLSMQGSSRN. Over residues 258–278 the composition is skewed to polar residues; the sequence is QGSSRNISQDMTQTSGTNLTS. Residues 258 to 338 form a disordered region; the sequence is QGSSRNISQD…DLGDAMSEED (81 aa). Residues Ser-265 and Ser-272 each carry the phosphoserine modification. Over residues 279–293 the composition is skewed to basic and acidic residues; that stretch reads EELRKRREAYFEKQQ. Over residues 294–305 the composition is skewed to low complexity; that stretch reads QKQQQQQQQQQQ. A compositionally biased stretch (polar residues) spans 306–325; sequence GDLSGQSSHPCERPATSSGA. Ser-328 carries the post-translational modification Phosphoserine. Residues 331-349 enclose the UIM 3 domain; the sequence is GDAMSEEDMLQAAVTMSLE.

In terms of assembly, interacts with STUB1/CHIP (when monoubiquitinated). Interacts with DNA repair proteins RAD23A and RAD23B. Interacts with BECN1 (via its poly-Gln domain). Interacts with PRKN, UBR2, VCP and tubulin. Short isoform 1 interacts with CASP7. Monoubiquitinated N-terminally by UBE2W, possibly leading to activate the deubiquitinating enzyme activity. In terms of tissue distribution, ubiquitous.

The protein resides in the nucleus matrix. It localises to the nucleus. It is found in the lysosome membrane. It carries out the reaction Thiol-dependent hydrolysis of ester, thioester, amide, peptide and isopeptide bonds formed by the C-terminal Gly of ubiquitin (a 76-residue protein attached to proteins as an intracellular targeting signal).. In terms of biological role, deubiquitinating enzyme involved in protein homeostasis maintenance, transcription, cytoskeleton regulation, myogenesis and degradation of misfolded chaperone substrates. Binds long polyubiquitin chains and trims them, while it has weak or no activity against chains of 4 or less ubiquitins. Involved in degradation of misfolded chaperone substrates via its interaction with STUB1/CHIP: recruited to monoubiquitinated STUB1/CHIP, and restricts the length of ubiquitin chain attached to STUB1/CHIP substrates and preventing further chain extension. Interacts with key regulators of transcription and represses transcription: acts as a histone-binding protein that regulates transcription. Acts as a negative regulator of mTORC1 signaling in response to amino acid deprivation by mediating deubiquitination of RHEB, thereby promoting RHEB inactivation by the TSC-TBC complex. Regulates autophagy via the deubiquitination of 'Lys-402' of BECN1 leading to the stabilization of BECN1. In Homo sapiens (Human), this protein is Ataxin-3.